We begin with the raw amino-acid sequence, 175 residues long: B9 domain-containing protein 2 (175 aa).

In terms of domain architecture, C2 B9-type spans 2–118; it reads AEVHVIGQII…ACPTWRPLGS (117 aa).

This sequence belongs to the B9D family. Part of the tectonic-like complex (also named B9 complex). Interacts with TUBG1.

It localises to the cytoplasm. The protein localises to the cytoskeleton. Its subcellular location is the cilium basal body. The protein resides in the cilium axoneme. It is found in the nucleus. Functionally, component of the tectonic-like complex, a complex localized at the transition zone of primary cilia and acting as a barrier that prevents diffusion of transmembrane proteins between the cilia and plasma membranes. This is B9 domain-containing protein 2 (B9D2) from Homo sapiens (Human).